We begin with the raw amino-acid sequence, 199 residues long: Recombination protein RecR (199 aa).

A C4-type zinc finger spans residues 57–72; it reads CQSCRTFTEETYCPIC. Positions 81–176 constitute a Toprim domain; the sequence is EVICVVETPA…TVSRIAHGVP (96 aa).

This sequence belongs to the RecR family.

Its function is as follows. May play a role in DNA repair. It seems to be involved in an RecBC-independent recombinational process of DNA repair. It may act with RecF and RecO. This is Recombination protein RecR from Shewanella pealeana (strain ATCC 700345 / ANG-SQ1).